Consider the following 1940-residue polypeptide: Myosin-13 (1940 aa).

Positions 33-82 (DSKKACFAMDDKEMYVKGMIQSRENDKVTVKTLDDRTLTLNSDQVFPMNP) constitute a Myosin N-terminal SH3-like domain. The region spanning 86–782 (DKIEDMAMMT…LLGLLEEMRD (697 aa)) is the Myosin motor domain. N6,N6,N6-trimethyllysine is present on lysine 130. 179 to 186 (GESGAGKT) serves as a coordination point for ATP. 2 actin-binding regions span residues 659–681 (LNKLMTNLRSTHPHFVRCLIPNE) and 761–775 (RFGHTKVFFKAGLLG). In terms of domain architecture, IQ spans 785-814 (LVTLMTRTQAICRGYLMRVEFKKMMERRES). A coiled-coil region spans residues 843-1940 (LLKSAEAERE…RDVGAQKMEE (1098 aa)). The tract at residues 1886 to 1940 (RQAEEAEEQANTQMSKCRRVQHELEEAEERADIAESQVNKLRAKSRDVGAQKMEE) is disordered. A compositionally biased stretch (basic and acidic residues) spans 1929 to 1940 (KSRDVGAQKMEE).

It belongs to the TRAFAC class myosin-kinesin ATPase superfamily. Myosin family. In terms of assembly, muscle myosin is a hexameric protein that consists of 2 heavy chain subunits (MHC), 2 alkali light chain subunits (MLC) and 2 regulatory light chain subunits (MLC-2).

It is found in the cytoplasm. The protein resides in the myofibril. Fast twitching myosin mediating the high-velocity and low-tension contractions of specific striated muscles. The polypeptide is Myosin-13 (MYH13) (Canis lupus familiaris (Dog)).